A 296-amino-acid chain; its full sequence is GTPase Era (296 aa).

The Era-type G domain maps to 7-174 (KCSMSAIVGA…VDYLCETSPY (168 aa)). The G1 stretch occupies residues 15–22 (GATNAGKS). 15 to 22 (GATNAGKS) is a binding site for GTP. A G2 region spans residues 41–45 (QTTRV). Residues 62–65 (DTPG) are G3. GTP is bound by residues 62–66 (DTPGI) and 124–127 (NKID). The segment at 124–127 (NKID) is G4. A G5 region spans residues 153 to 155 (ISA). Positions 205 to 282 (LRHELPYSLS…HLFLFVKVRE (78 aa)) constitute a KH type-2 domain.

This sequence belongs to the TRAFAC class TrmE-Era-EngA-EngB-Septin-like GTPase superfamily. Era GTPase family. As to quaternary structure, monomer.

The protein resides in the cytoplasm. The protein localises to the cell inner membrane. Its function is as follows. An essential GTPase that binds both GDP and GTP, with rapid nucleotide exchange. Plays a role in 16S rRNA processing and 30S ribosomal subunit biogenesis and possibly also in cell cycle regulation and energy metabolism. The protein is GTPase Era of Ehrlichia ruminantium (strain Welgevonden).